Consider the following 319-residue polypeptide: L-lactate dehydrogenase (319 aa).

NAD(+)-binding positions include V11, D32, R37, Y62, and 76–77 (GV). Residues Q79, R85, and 117 to 120 (NPVD) each bind substrate. NAD(+) is bound by residues 115-117 (VTN) and S140. 145 to 148 (DTAR) provides a ligand contact to substrate. Residues R150 and H165 each contribute to the beta-D-fructose 1,6-bisphosphate site. Residue H172 is the Proton acceptor of the active site. Y217 is modified (phosphotyrosine). Residue T226 participates in substrate binding.

Belongs to the LDH/MDH superfamily. LDH family. As to quaternary structure, homotetramer.

The protein localises to the cytoplasm. It carries out the reaction (S)-lactate + NAD(+) = pyruvate + NADH + H(+). It participates in fermentation; pyruvate fermentation to lactate; (S)-lactate from pyruvate: step 1/1. Its activity is regulated as follows. Allosterically activated by fructose 1,6-bisphosphate (FBP). Functionally, catalyzes the conversion of lactate to pyruvate. In Thermotoga sp. (strain RQ2), this protein is L-lactate dehydrogenase.